The sequence spans 92 residues: MPRSLKKGPFIDLHLLKKVEKAVESGDKKPLKTWSRRSMIIPTMIGLTIAVHNGRQHVPVFVTEEMIGHKLGEFAPTRTYRGHAADKKAKKR.

It belongs to the universal ribosomal protein uS19 family.

Functionally, protein S19 forms a complex with S13 that binds strongly to the 16S ribosomal RNA. In Vibrio vulnificus (strain CMCP6), this protein is Small ribosomal subunit protein uS19.